Here is a 352-residue protein sequence, read N- to C-terminus: S-adenosylmethionine:tRNA ribosyltransferase-isomerase (352 aa).

The protein belongs to the QueA family. As to quaternary structure, monomer.

The protein localises to the cytoplasm. The catalysed reaction is 7-aminomethyl-7-carbaguanosine(34) in tRNA + S-adenosyl-L-methionine = epoxyqueuosine(34) in tRNA + adenine + L-methionine + 2 H(+). It functions in the pathway tRNA modification; tRNA-queuosine biosynthesis. Transfers and isomerizes the ribose moiety from AdoMet to the 7-aminomethyl group of 7-deazaguanine (preQ1-tRNA) to give epoxyqueuosine (oQ-tRNA). This Gloeobacter violaceus (strain ATCC 29082 / PCC 7421) protein is S-adenosylmethionine:tRNA ribosyltransferase-isomerase.